A 177-amino-acid chain; its full sequence is Ribosome maturation factor RimM (177 aa).

One can recognise a PRC barrel domain in the interval 104–177 (GVDGIWADLI…IIKVKLMEGM (74 aa)).

This sequence belongs to the RimM family. As to quaternary structure, binds ribosomal protein uS19.

The protein localises to the cytoplasm. In terms of biological role, an accessory protein needed during the final step in the assembly of 30S ribosomal subunit, possibly for assembly of the head region. Essential for efficient processing of 16S rRNA. May be needed both before and after RbfA during the maturation of 16S rRNA. It has affinity for free ribosomal 30S subunits but not for 70S ribosomes. The protein is Ribosome maturation factor RimM of Magnetococcus marinus (strain ATCC BAA-1437 / JCM 17883 / MC-1).